We begin with the raw amino-acid sequence, 378 residues long: Mevalonate kinase (378 aa).

ATP contacts are provided by residues K10, S138, and 143–149 (GSGLGSS). Mg(2+)-binding residues include S149 and E193. D204 acts as the Proton acceptor in catalysis.

This sequence belongs to the GHMP kinase family. Mevalonate kinase subfamily. It depends on Mg(2+) as a cofactor.

It localises to the cytoplasm. The enzyme catalyses (R)-mevalonate + ATP = (R)-5-phosphomevalonate + ADP + H(+). The protein operates within isoprenoid biosynthesis; isopentenyl diphosphate biosynthesis via mevalonate pathway; isopentenyl diphosphate from (R)-mevalonate: step 1/3. Its activity is inhibited in vitro by geranyl pyrophosphate (GPP) and farnesyl pyrophosphate (FPP) that bind competitively at the ATP-binding site on the enzyme. In terms of biological role, catalyzes the phosphorylation of mevalonate to mevalonate 5-phosphate, a key step in isoprenoid and cholesterol biosynthesis. This is Mevalonate kinase from Arabidopsis thaliana (Mouse-ear cress).